Consider the following 160-residue polypeptide: NADH-quinone oxidoreductase subunit B (160 aa).

Positions 37, 38, 102, and 132 each coordinate [4Fe-4S] cluster.

The protein belongs to the complex I 20 kDa subunit family. In terms of assembly, NDH-1 is composed of 14 different subunits. Subunits NuoB, C, D, E, F, and G constitute the peripheral sector of the complex. [4Fe-4S] cluster is required as a cofactor.

The protein resides in the cell inner membrane. It carries out the reaction a quinone + NADH + 5 H(+)(in) = a quinol + NAD(+) + 4 H(+)(out). Its function is as follows. NDH-1 shuttles electrons from NADH, via FMN and iron-sulfur (Fe-S) centers, to quinones in the respiratory chain. Couples the redox reaction to proton translocation (for every two electrons transferred, four hydrogen ions are translocated across the cytoplasmic membrane), and thus conserves the redox energy in a proton gradient. This Neisseria gonorrhoeae (strain ATCC 700825 / FA 1090) protein is NADH-quinone oxidoreductase subunit B.